A 600-amino-acid polypeptide reads, in one-letter code: DNA mismatch repair protein MutL (600 aa).

Residues 327–405 form a disordered region; it reads DGSRAATTGA…FSPQPAAAEP (79 aa). Positions 349-367 are enriched in polar residues; that stretch reads PNSQRPQTAWSAETSSSRP.

The protein belongs to the DNA mismatch repair MutL/HexB family.

This protein is involved in the repair of mismatches in DNA. It is required for dam-dependent methyl-directed DNA mismatch repair. May act as a 'molecular matchmaker', a protein that promotes the formation of a stable complex between two or more DNA-binding proteins in an ATP-dependent manner without itself being part of a final effector complex. In Rhizobium johnstonii (strain DSM 114642 / LMG 32736 / 3841) (Rhizobium leguminosarum bv. viciae), this protein is DNA mismatch repair protein MutL.